We begin with the raw amino-acid sequence, 732 residues long: Wall-associated receptor kinase 2 (732 aa).

The first 23 residues, 1–23, serve as a signal peptide directing secretion; sequence MKVQEGLFVVAVFYLAYTQLVKG. Topologically, residues 24–329 are extracellular; that stretch reads QPRKECQTRC…RKVRPEYFRW (306 aa). N-linked (GlcNAc...) asparagine glycosylation is found at Asn-57, Asn-75, Asn-111, Asn-154, Asn-217, and Asn-246. An EGF-like 1 domain is found at 230–277; the sequence is GDKTCKQVEYRGVCGGNSTCFDSTGGTGYNCKCLEGFEGNPYLPNGCQ. 6 disulfides stabilise this stretch: Cys-234/Cys-249, Cys-243/Cys-260, Cys-262/Cys-276, Cys-282/Cys-295, Cys-289/Cys-304, and Cys-306/Cys-318. The 42-residue stretch at 278–319 folds into the EGF-like 2; calcium-binding domain; it reads DINECISSRHNCSEHSTCENTKGSFNCNCPSGYRKDSLNSCT. N-linked (GlcNAc...) asparagine glycosylation is present at Asn-288. The chain crosses the membrane as a helical span at residues 330-350; sequence TQIFLGTTIGFSVIMLGISCL. Over 351-732 the chain is Cytoplasmic; sequence QQKIKHRKNT…VTTLDIEAGR (382 aa). Thr-393 carries the phosphothreonine modification. In terms of domain architecture, Protein kinase spans 404–677; that stretch reads YHESRILGQG…KEVAAELEAL (274 aa). ATP-binding positions include 410 to 418 and Lys-432; that span reads LGQGGQGTV. Tyr-477 is subject to Phosphotyrosine. Asp-529 functions as the Proton acceptor in the catalytic mechanism. 2 positions are modified to phosphothreonine: Thr-563 and Thr-568. Tyr-576 is subject to Phosphotyrosine.

The protein belongs to the protein kinase superfamily. Ser/Thr protein kinase family. Predominantly expressed in green tissues such as stems and leaves. Detected at organ junctions.

The protein resides in the membrane. It carries out the reaction L-seryl-[protein] + ATP = O-phospho-L-seryl-[protein] + ADP + H(+). The enzyme catalyses L-threonyl-[protein] + ATP = O-phospho-L-threonyl-[protein] + ADP + H(+). In terms of biological role, serine/threonine-protein kinase that may function as a signaling receptor of extracellular matrix component. Binding to pectin may have significance in the control of cell expansion, morphogenesis and development. The sequence is that of Wall-associated receptor kinase 2 (WAK2) from Arabidopsis thaliana (Mouse-ear cress).